The sequence spans 614 residues: 2-succinyl-5-enolpyruvyl-6-hydroxy-3-cyclohexene-1-carboxylate synthase (614 aa).

The protein belongs to the TPP enzyme family. MenD subfamily. In terms of assembly, homodimer. Mg(2+) is required as a cofactor. Requires Mn(2+) as cofactor. Thiamine diphosphate serves as cofactor.

It catalyses the reaction isochorismate + 2-oxoglutarate + H(+) = 5-enolpyruvoyl-6-hydroxy-2-succinyl-cyclohex-3-ene-1-carboxylate + CO2. It participates in quinol/quinone metabolism; 1,4-dihydroxy-2-naphthoate biosynthesis; 1,4-dihydroxy-2-naphthoate from chorismate: step 2/7. Its pathway is quinol/quinone metabolism; menaquinone biosynthesis. Functionally, catalyzes the thiamine diphosphate-dependent decarboxylation of 2-oxoglutarate and the subsequent addition of the resulting succinic semialdehyde-thiamine pyrophosphate anion to isochorismate to yield 2-succinyl-5-enolpyruvyl-6-hydroxy-3-cyclohexene-1-carboxylate (SEPHCHC). The polypeptide is 2-succinyl-5-enolpyruvyl-6-hydroxy-3-cyclohexene-1-carboxylate synthase (Sorangium cellulosum (strain So ce56) (Polyangium cellulosum (strain So ce56))).